A 339-amino-acid polypeptide reads, in one-letter code: MAFTLAQLAQQLGAQVHGDGTLEIRKVATLEKAGEGDITFLSNKKYRHYLEQSKATAVLITEADLPFCPTNALVLKDPYVGFARVAQLLDTTPQPATDIHPSAVIAADVQLGERVAIGANAVIESGVVLGDDVRIGPGCFVGKNTRLGARSRLWANVTLYHNITMGTDCLVQSGTVIGADGFGYANERGEWIKIPQLGGVTIGNRVEIGACTTIDRGALEDTRIADNVIIDNQCQIAHNVEIGYGTAVAGSTVMAGSLKVGKYCIIGGASVFNGHMEICDQATVTGMAMVMRPITEPGVYSSGIPLQTNKEWRKTAARVMRIEEMHKRLSKLEKKLDQE.

Residue His-238 is the Proton acceptor of the active site.

Belongs to the transferase hexapeptide repeat family. LpxD subfamily. In terms of assembly, homotrimer.

It carries out the reaction a UDP-3-O-[(3R)-3-hydroxyacyl]-alpha-D-glucosamine + a (3R)-hydroxyacyl-[ACP] = a UDP-2-N,3-O-bis[(3R)-3-hydroxyacyl]-alpha-D-glucosamine + holo-[ACP] + H(+). It participates in bacterial outer membrane biogenesis; LPS lipid A biosynthesis. In terms of biological role, catalyzes the N-acylation of UDP-3-O-acylglucosamine using 3-hydroxyacyl-ACP as the acyl donor. Is involved in the biosynthesis of lipid A, a phosphorylated glycolipid that anchors the lipopolysaccharide to the outer membrane of the cell. The sequence is that of UDP-3-O-acylglucosamine N-acyltransferase from Aeromonas hydrophila subsp. hydrophila (strain ATCC 7966 / DSM 30187 / BCRC 13018 / CCUG 14551 / JCM 1027 / KCTC 2358 / NCIMB 9240 / NCTC 8049).